The following is a 43-amino-acid chain: Protein PsbN (43 aa).

A helical membrane pass occupies residues 7–27 (ITIFLSCFLVGVTGYALYTAF).

This sequence belongs to the PsbN family.

It is found in the plastid. Its subcellular location is the chloroplast thylakoid membrane. Functionally, may play a role in photosystem I and II biogenesis. In Klebsormidium bilatum (Filamentous green alga), this protein is Protein PsbN.